Reading from the N-terminus, the 970-residue chain is ATP-dependent DNA helicase DDX11 (970 aa).

A Helicase ATP-binding domain is found at 9–445; it reads GAIHFPFPFT…KNLMYLKQIL (437 aa). 44–51 lines the ATP pocket; the sequence is SPTGTGKS. Ser-262 is modified (phosphoserine). [4Fe-4S] cluster-binding residues include Cys-267 and Cys-285. The segment covering 289-304 has biased composition (basic and acidic residues); it reads QRSRHEKKKGAEEEKP. The interval 289–312 is disordered; it reads QRSRHEKKKGAEEEKPKRRRQEKQ. Residues Cys-315 and Cys-350 each contribute to the [4Fe-4S] cluster site. Positions 393-396 match the DEAH box motif; that stretch reads DEAH. A disordered region spans residues 818–849; that stretch reads TLSPRPGTPREGSGGEPVHEGRQPVHRQGHQA.

This sequence belongs to the DEAD box helicase family. DEAH subfamily. DDX11/CHL1 sub-subfamily. Associates with the CTF18-RFC complex. Associates with a cohesin complex composed of RAD21, SMC1 proteins and SMC3. Interacts with CHTF18. Interacts with DSCC1. Interacts with FEN1; this interaction is direct and increases flap endonuclease activity of FEN1. Interacts with PCNA. Interacts with POLR1A and UBTF. Interacts with RAD21, SMC1 proteins and SMC3. Interacts with RFC2. Interacts with TIMELESS; this interaction increases recruitment of both proteins onto chromatin in response to replication stress induction by hydroxyurea. As to quaternary structure, (Microbial infection) Interacts with bovine papillomavirus type 1 regulatory protein E2; this interaction stimulates the recruitment of E2 onto mitotic chromosomes. Mg(2+) is required as a cofactor. [4Fe-4S] cluster serves as cofactor. In terms of tissue distribution, expressed in melanoma cells. Not detected in epidermal melanocytes of normal skin (at protein level). Highly expressed in spleen, B-cells, thymus, testis, ovary, small intestine and pancreas. Very low expression seen in brain. Expressed in dividing cells and/or cells undergoing high levels of recombination. No expression detected in cells signaled to terminally differentiate. Expressed weakly in keratinocytes.

Its subcellular location is the nucleus. It localises to the nucleolus. The protein resides in the cytoplasm. It is found in the cytoskeleton. The protein localises to the spindle pole. Its subcellular location is the midbody. It localises to the microtubule organizing center. The protein resides in the centrosome. It is found in the chromosome. It carries out the reaction Couples ATP hydrolysis with the unwinding of duplex DNA at the replication fork by translocating in the 5'-3' direction. This creates two antiparallel DNA single strands (ssDNA). The leading ssDNA polymer is the template for DNA polymerase III holoenzyme which synthesizes a continuous strand.. It catalyses the reaction ATP + H2O = ADP + phosphate + H(+). ATPase activity is stimulated by high magnesium salt levels (up to a 0.1 M), and potassium salts (glutamate, chloride or acetate) are more effective than the corresponding sodium salts. ATPase activity is enhanced by the long non-coding RNA (lncRNA) cohesion regulator noncoding RNA (CONCR). Double-stranded DNA helicase activity is maximal with magnesium ions at low concentrations (0.5-1 mM) whereas is markedly inhibited at higher levels (5 mM and above). Double-stranded DNA helicase activity is stimulated by 25-50 mM potassium acetate, stimulated to a lesser extent by 25 mM of ammonium acetate, and markedly inhibited by sodium acetate. Functionally, DNA-dependent ATPase and ATP-dependent DNA helicase that participates in various functions in genomic stability, including DNA replication, DNA repair and heterochromatin organization as well as in ribosomal RNA synthesis. Its double-stranded DNA helicase activity requires either a minimal 5'-single-stranded tail length of approximately 15 nt (flap substrates) or 10 nt length single-stranded gapped DNA substrates of a partial duplex DNA structure for helicase loading and translocation along DNA in a 5' to 3' direction. The helicase activity is capable of displacing duplex regions up to 100 bp, which can be extended up to 500 bp by the replication protein A (RPA) or the cohesion CTF18-replication factor C (Ctf18-RFC) complex activities. Also shows ATPase- and helicase activities on substrates that mimic key DNA intermediates of replication, repair and homologous recombination reactions, including forked duplex, anti-parallel G-quadruplex and three-stranded D-loop DNA molecules. Plays a role in DNA double-strand break (DSB) repair at the DNA replication fork during DNA replication recovery from DNA damage. Recruited with TIMELESS factor upon DNA-replication stress response at DNA replication fork to preserve replication fork progression, and hence ensure DNA replication fidelity. Also cooperates with TIMELESS factor during DNA replication to regulate proper sister chromatid cohesion and mitotic chromosome segregation. Stimulates 5'-single-stranded DNA flap endonuclease activity of FEN1 in an ATP- and helicase-independent manner; and hence it may contribute in Okazaki fragment processing at DNA replication fork during lagging strand DNA synthesis. Its ability to function at DNA replication fork is modulated by its binding to long non-coding RNA (lncRNA) cohesion regulator non-coding RNA DDX11-AS1/CONCR, which is able to increase both DDX11 ATPase activity and binding to DNA replicating regions. Also plays a role in heterochromatin organization. Involved in rRNA transcription activation through binding to active hypomethylated rDNA gene loci by recruiting UBTF and the RNA polymerase Pol I transcriptional machinery. Plays a role in embryonic development and prevention of aneuploidy. Involved in melanoma cell proliferation and survival. Associates with chromatin at DNA replication fork regions. Binds to single- and double-stranded DNAs. Its function is as follows. (Microbial infection) Required for bovine papillomavirus type 1 regulatory protein E2 loading onto mitotic chromosomes during DNA replication for the viral genome to be maintained and segregated. The polypeptide is ATP-dependent DNA helicase DDX11 (Homo sapiens (Human)).